We begin with the raw amino-acid sequence, 288 residues long: MFILPPPQEPLLGAHTSAAGGLHNALYEGRDIGATTVQLFTANQRQWKRRALTQEMVDQFRIALNETSLSYIMSHAGYLNNPGAPNPEILEKTRVCMHQEIADCISLGISFVNFHPGAALSDSKESCLDRAITSFSQMAPLFENHPPLVVLLETTAGQGSLIGSSFEELAYLIQGIKALIPIGVCLDTCHIFAAGYDISSVAGWEQVLKHFDAVIGLSFLRAIHLNDSVFALGKNKDRHAPIGEGCIGSDSFCFLMQDERTRMLPKYLETPGGPDLWTKEIRYLQKVC.

Residues histidine 75, histidine 115, glutamate 153, aspartate 187, histidine 190, histidine 224, aspartate 237, histidine 239, and glutamate 269 each coordinate Zn(2+).

This sequence belongs to the AP endonuclease 2 family. It depends on Zn(2+) as a cofactor.

It carries out the reaction Endonucleolytic cleavage to 5'-phosphooligonucleotide end-products.. Functionally, endonuclease IV plays a role in DNA repair. It cleaves phosphodiester bonds at apurinic or apyrimidinic (AP) sites, generating a 3'-hydroxyl group and a 5'-terminal sugar phosphate. The protein is Probable endonuclease 4 of Chlamydia trachomatis serovar L2 (strain ATCC VR-902B / DSM 19102 / 434/Bu).